The primary structure comprises 188 residues: MSMENSPLKYQLLVAMPQMADPDFEHSVTYIVEHSSEGAMGLTLNRPVQISLGDILSDMDIEIEVPPSERHRVVAGGPVQQEAGFVLHSAATRWHASIPLSDGLILTTSRDILEAIAIGEGPEQSLICLGYAGWDAGQLEQELVDNAWLSTPASRELVLETPFEQTWHAAAARIGVDMSLIATQAGHC.

It belongs to the UPF0301 (AlgH) family.

In Alcanivorax borkumensis (strain ATCC 700651 / DSM 11573 / NCIMB 13689 / SK2), this protein is UPF0301 protein ABO_0112.